The sequence spans 35 residues: uncharacterized protein (35 aa).

This is an uncharacterized protein from Haloarcula hispanica (His1V).